The chain runs to 875 residues: Pyrogallol hydroxytransferase large subunit (875 aa).

Positions 82–104 (RKSFDPNGERNPQLRGAGLSKQD) are disordered. Residue serine 175 coordinates Mo-bis(molybdopterin guanine dinucleotide).

Belongs to the prokaryotic molybdopterin-containing oxidoreductase family. Heterodimer of a large and a small subunit. Requires Mo-bis(molybdopterin guanine dinucleotide) as cofactor.

The enzyme catalyses 1,2,3,5-tetrahydroxybenzene + 1,2,3-trihydroxybenzene = 1,2,3,5-tetrahydroxybenzene + 1,3,5-trihydroxybenzene. Functionally, isomerization of pyrogallol to phloroglucin. In Pelobacter acidigallici, this protein is Pyrogallol hydroxytransferase large subunit (athL).